The chain runs to 416 residues: Tryptophan synthase beta chain (416 aa).

Residues Met1–His23 are disordered. Residue Lys109 is modified to N6-(pyridoxal phosphate)lysine.

Belongs to the TrpB family. Tetramer of two alpha and two beta chains. Pyridoxal 5'-phosphate is required as a cofactor.

It carries out the reaction (1S,2R)-1-C-(indol-3-yl)glycerol 3-phosphate + L-serine = D-glyceraldehyde 3-phosphate + L-tryptophan + H2O. It participates in amino-acid biosynthesis; L-tryptophan biosynthesis; L-tryptophan from chorismate: step 5/5. The beta subunit is responsible for the synthesis of L-tryptophan from indole and L-serine. This is Tryptophan synthase beta chain from Prochlorococcus marinus (strain MIT 9211).